Reading from the N-terminus, the 440-residue chain is Adenosylhomocysteinase (440 aa).

Substrate-binding residues include threonine 64, aspartate 139, and glutamate 164. 165–167 contributes to the NAD(+) binding site; it reads TTT. Residues lysine 194 and aspartate 198 each coordinate substrate. Residues asparagine 199, 228-233, glutamate 251, asparagine 286, 307-309, and asparagine 352 contribute to the NAD(+) site; these read GFGDVG and IGH.

This sequence belongs to the adenosylhomocysteinase family. The cofactor is NAD(+).

The protein localises to the cytoplasm. It catalyses the reaction S-adenosyl-L-homocysteine + H2O = L-homocysteine + adenosine. The protein operates within amino-acid biosynthesis; L-homocysteine biosynthesis; L-homocysteine from S-adenosyl-L-homocysteine: step 1/1. May play a key role in the regulation of the intracellular concentration of adenosylhomocysteine. The protein is Adenosylhomocysteinase of Granulibacter bethesdensis (strain ATCC BAA-1260 / CGDNIH1).